The primary structure comprises 784 residues: 5-methyltetrahydropteroyltriglutamate--homocysteine methyltransferase (784 aa).

5-methyltetrahydropteroyltri-L-glutamate contacts are provided by residues Arg-16–Lys-19 and Lys-112. Residues Ile-460–Ser-462 and Glu-513 each bind L-homocysteine. L-methionine-binding positions include Ile-460 to Ser-462 and Glu-513. Position 590 (Trp-590) interacts with 5-methyltetrahydropteroyltri-L-glutamate. Asp-628 lines the L-homocysteine pocket. Asp-628 provides a ligand contact to L-methionine. Glu-634 serves as a coordination point for 5-methyltetrahydropteroyltri-L-glutamate. His-670, Cys-672, and Glu-694 together coordinate Zn(2+). His-723 functions as the Proton donor in the catalytic mechanism. Residue Cys-755 coordinates Zn(2+).

Belongs to the vitamin-B12 independent methionine synthase family. Zn(2+) serves as cofactor.

The catalysed reaction is 5-methyltetrahydropteroyltri-L-glutamate + L-homocysteine = tetrahydropteroyltri-L-glutamate + L-methionine. It functions in the pathway amino-acid biosynthesis; L-methionine biosynthesis via de novo pathway; L-methionine from L-homocysteine (MetE route): step 1/1. Its function is as follows. Catalyzes the transfer of a methyl group from 5-methyltetrahydrofolate to homocysteine resulting in methionine formation. The polypeptide is 5-methyltetrahydropteroyltriglutamate--homocysteine methyltransferase (Acidithiobacillus ferrooxidans (strain ATCC 23270 / DSM 14882 / CIP 104768 / NCIMB 8455) (Ferrobacillus ferrooxidans (strain ATCC 23270))).